Consider the following 605-residue polypeptide: Elongation factor 4 (605 aa).

One can recognise a tr-type G domain in the interval 9-192 (GMIRNFCIIA…AIVARVPAPA (184 aa)). GTP contacts are provided by residues 21 to 26 (DHGKST) and 139 to 142 (NKID).

It belongs to the TRAFAC class translation factor GTPase superfamily. Classic translation factor GTPase family. LepA subfamily.

Its subcellular location is the cell inner membrane. It carries out the reaction GTP + H2O = GDP + phosphate + H(+). In terms of biological role, required for accurate and efficient protein synthesis under certain stress conditions. May act as a fidelity factor of the translation reaction, by catalyzing a one-codon backward translocation of tRNAs on improperly translocated ribosomes. Back-translocation proceeds from a post-translocation (POST) complex to a pre-translocation (PRE) complex, thus giving elongation factor G a second chance to translocate the tRNAs correctly. Binds to ribosomes in a GTP-dependent manner. This chain is Elongation factor 4, found in Chlorobaculum tepidum (strain ATCC 49652 / DSM 12025 / NBRC 103806 / TLS) (Chlorobium tepidum).